A 179-amino-acid chain; its full sequence is MRVEVVRAPGPLNRPALAEAIDTLGKKSATVRPSSATHRATAQTLSHEITSTDLFATSTATEQQQTLLLAINDDDGAVMGFLKTGVKHLFYLNPRGEYTEIDPICVLDFYVDEVWQRRGVGLQLFQRLLQEENTTPAQLAYDRPSPKLFAFLKKHVGLTEYFPQPNRFVVFDAYFQSRE.

Positions 1 to 175 (MRVEVVRAPG…NRFVVFDAYF (175 aa)) constitute an N-acetyltransferase domain. Acetyl-CoA-binding positions include 109 to 122 (FYVD…GVGL) and 145 to 154 (SPKLFAFLKK).

It belongs to the acetyltransferase ATAT1 family.

It catalyses the reaction L-lysyl-[alpha-tubulin] + acetyl-CoA = N(6)-acetyl-L-lysyl-[alpha-tubulin] + CoA + H(+). Its function is as follows. Specifically acetylates 'Lys-40' in alpha-tubulin on the lumenal side of microtubules. Promotes microtubule destabilization and accelerates microtubule dynamics; this activity may be independent of acetylation activity. Acetylates alpha-tubulin with a slow enzymatic rate, due to a catalytic site that is not optimized for acetyl transfer. Enters the microtubule through each end and diffuses quickly throughout the lumen of microtubules. Acetylates only long/old microtubules because of its slow acetylation rate since it does not have time to act on dynamically unstable microtubules before the enzyme is released. In Phytophthora infestans (strain T30-4) (Potato late blight agent), this protein is Alpha-tubulin N-acetyltransferase.